The sequence spans 638 residues: 2-isopropylmalate synthase (638 aa).

A Pyruvate carboxyltransferase domain is found at 72–346 (PRWCSVDLRD…DPQLDLSNVP (275 aa)). 4 residues coordinate Mg(2+): D81, H285, H287, and N321. A regulatory domain region spans residues 488-638 (VEQSGMTAAG…SAINRSQRQR (151 aa)).

The protein belongs to the alpha-IPM synthase/homocitrate synthase family. LeuA type 2 subfamily. Homodimer. Requires Mg(2+) as cofactor.

It localises to the cytoplasm. It catalyses the reaction 3-methyl-2-oxobutanoate + acetyl-CoA + H2O = (2S)-2-isopropylmalate + CoA + H(+). Its pathway is amino-acid biosynthesis; L-leucine biosynthesis; L-leucine from 3-methyl-2-oxobutanoate: step 1/4. Catalyzes the condensation of the acetyl group of acetyl-CoA with 3-methyl-2-oxobutanoate (2-ketoisovalerate) to form 3-carboxy-3-hydroxy-4-methylpentanoate (2-isopropylmalate). This is 2-isopropylmalate synthase from Bifidobacterium longum subsp. infantis (strain ATCC 15697 / DSM 20088 / JCM 1222 / NCTC 11817 / S12).